Reading from the N-terminus, the 64-residue chain is Large ribosomal subunit protein bL28 (64 aa).

The interval 1–23 is disordered; that stretch reads MARKDQISHRGPLSGNNRSHALN.

This sequence belongs to the bacterial ribosomal protein bL28 family.

The sequence is that of Large ribosomal subunit protein bL28 from Mesomycoplasma hyopneumoniae (strain 232) (Mycoplasma hyopneumoniae).